The sequence spans 326 residues: dTDP-4-dehydro-6-deoxy-D-allose reductase (326 aa).

NAD(+) is bound by residues 15-21 (GALGFIG) and 129-132 (MSSS). Residue Y160 is the Proton donor/acceptor of the active site. NAD(+) is bound by residues K164 and 187–190 (PGNV).

It belongs to the NAD(P)-dependent epimerase/dehydratase family.

It catalyses the reaction dTDP-6-deoxy-alpha-D-allose + NAD(+) = dTDP-4-dehydro-6-deoxy-alpha-D-allose + NADH + H(+). The catalysed reaction is dTDP-6-deoxy-alpha-D-allose + NADP(+) = dTDP-4-dehydro-6-deoxy-alpha-D-allose + NADPH + H(+). In terms of biological role, catalyzes the stereospecific reduction of the C-4 keto group of dTDP-4-dehydro-6-deoxy-D-allose, leading to dTDP-6-deoxy-D-allose, an intermediate in the biosynthesis of the mycinose moiety of dihydrochalcomycin (GERI-155) antibiotic. Cannot directly reduce dTDP-4-dehydro-6-deoxyglucose, and thus acts after the epimerization step catalyzed by GerF. In Streptomyces sp, this protein is dTDP-4-dehydro-6-deoxy-D-allose reductase (gerKI).